Here is a 1295-residue protein sequence, read N- to C-terminus: Phosphoribosylformylglycinamidine synthase (1295 aa).

Residues 305–327 (WPGAATGSGGEIRDEGATGRGAK) form a disordered region. Residues 307 to 318 (GAATGSGGEIRD) and Ala-678 each bind ATP. Positions 718, 722, and 884 each coordinate Mg(2+). Residue Ser-886 participates in ATP binding. The region spanning 1042-1295 (VAVLREQGVN…IFRNARKQLG (254 aa)) is the Glutamine amidotransferase type-1 domain. The Nucleophile role is filled by Cys-1135. Catalysis depends on residues His-1260 and Glu-1262.

This sequence in the N-terminal section; belongs to the FGAMS family. In terms of assembly, monomer. In terms of processing, both N-terminus methionine truncation and retention have been observed for this protein.

Its subcellular location is the cytoplasm. It catalyses the reaction N(2)-formyl-N(1)-(5-phospho-beta-D-ribosyl)glycinamide + L-glutamine + ATP + H2O = 2-formamido-N(1)-(5-O-phospho-beta-D-ribosyl)acetamidine + L-glutamate + ADP + phosphate + H(+). It participates in purine metabolism; IMP biosynthesis via de novo pathway; 5-amino-1-(5-phospho-D-ribosyl)imidazole from N(2)-formyl-N(1)-(5-phospho-D-ribosyl)glycinamide: step 1/2. In terms of biological role, phosphoribosylformylglycinamidine synthase involved in the purines biosynthetic pathway. Catalyzes the ATP-dependent conversion of formylglycinamide ribonucleotide (FGAR) and glutamine to yield formylglycinamidine ribonucleotide (FGAM) and glutamate. The chain is Phosphoribosylformylglycinamidine synthase from Escherichia coli (strain K12).